The chain runs to 147 residues: Ribonuclease pancreatic gamma-type (147 aa).

An N-terminal signal peptide occupies residues 1–25 (MGLEKSFLLFSLLVLVLGWVQPSLG). Substrate-binding residues include Lys-35 and Arg-38. His-40 (proton acceptor) is an active-site residue. 4 disulfide bridges follow: Cys-54/Cys-112, Cys-68/Cys-123, Cys-86/Cys-138, and Cys-93/Cys-100. Substrate is bound by residues 69–73 (KPMNT), Lys-94, and Arg-113. The Proton donor role is filled by His-142.

Belongs to the pancreatic ribonuclease family. As to quaternary structure, monomer.

It localises to the secreted. The enzyme catalyses an [RNA] containing cytidine + H2O = an [RNA]-3'-cytidine-3'-phosphate + a 5'-hydroxy-ribonucleotide-3'-[RNA].. It catalyses the reaction an [RNA] containing uridine + H2O = an [RNA]-3'-uridine-3'-phosphate + a 5'-hydroxy-ribonucleotide-3'-[RNA].. Its function is as follows. Endonuclease that catalyzes the cleavage of RNA on the 3' side of pyrimidine nucleotides. Acts on single-stranded and double-stranded RNA. In Rattus rattus (Black rat), this protein is Ribonuclease pancreatic gamma-type.